Consider the following 481-residue polypeptide: RAC-alpha serine/threonine-protein kinase (481 aa).

The PH domain occupies 5 to 108; it reads AIVKEGWLHK…WIQVIQHVAD (104 aa). A disordered region spans residues 120-141; the sequence is VRSGDSPSDNSGAEEMEVSHSK. 2 O-linked (GlcNAc) serine glycosylation sites follow: S127 and S130. Residues 151–409 enclose the Protein kinase domain; it reads FEYLKLLGKG…AKEIMQHKFF (259 aa). Residues 157–165 and K180 each bind ATP; that span reads LGKGTFGKV. D275 acts as the Proton acceptor in catalysis. T306 carries O-linked (GlcNAc) threonine glycosylation. T309 is subject to Phosphothreonine; by PDPK1. O-linked (GlcNAc) threonine glycosylation occurs at T313. The region spanning 410-481 is the AGC-kinase C-terminal domain; sequence AGIVWQDVYE…QFSYSASGNA (72 aa). The residue at position 474 (S474) is a Phosphoserine. Residue S474 is glycosylated (O-linked (GlcNAc) serine; alternate). Y475 carries the post-translational modification Phosphotyrosine.

Belongs to the protein kinase superfamily. AGC Ser/Thr protein kinase family. RAC subfamily. Post-translationally, cleavage by caspase-3/CASP3. Cleaved at the caspase-3 consensus site Asp-463 during apoptosis, resulting in down-regulation of the AKT signaling pathway and decreased cell survival. In terms of processing, phosphorylation on Thr-309 and Ser-474 is required for full activity. Phosphorylation of the activation loop at Thr-309 by PDPK1/PDK1 is a prerequisite for full activation. Phosphorylation by mTORC2 at Ser-474 in response to growth factors plays a key role in AKT1 activation by facilitating subsequent phosphorylation of the activation loop by PDPK1/PDK1. As to expression, expressed in the oocyte.

It localises to the cytoplasm. The protein resides in the nucleus. It catalyses the reaction L-seryl-[protein] + ATP = O-phospho-L-seryl-[protein] + ADP + H(+). The enzyme catalyses L-threonyl-[protein] + ATP = O-phospho-L-threonyl-[protein] + ADP + H(+). With respect to regulation, activated in response to insulin. Three specific sites, one in the kinase domain (Thr-309) and the two other ones in the C-terminal regulatory region (Ser-474 and Tyr-475), need to be phosphorylated for its full activation. Its function is as follows. AKT1 is one of several closely related serine/threonine-protein kinases known as the AKT kinase, and which regulate many processes including metabolism, proliferation, cell survival, growth and angiogenesis. This is mediated through serine and/or threonine phosphorylation of a range of downstream substrates. Over 100 substrate candidates have been reported so far, but for most of them, no isoform specificity has been reported. Signals downstream of phosphatidylinositol 3-kinase (PI(3)K) to mediate the effects of various growth factors such as platelet-derived growth factor (PDGF), epidermal growth factor (EGF), insulin and insulin-like growth factor 1 (IGF1). Plays a role as a key modulator of the AKT-mTOR signaling pathway controlling the tempo of the process of newborn neurons integration during adult neurogenesis, including correct neuron positioning, dendritic development and synapse formation. Plays a role in glucose transport by mediating insulin-induced translocation of the GLUT4 glucose transporter to the cell surface. Mediates the antiapoptotic effects of IGF1. Mediates insulin-stimulated protein synthesis, partly by playing a role in both insulin-induced phosphorylation of 4E-BP1 and in insulin-induced activation of p70 S6 kinase. Promotes glycogen synthesis by mediating the insulin-induced activation of glycogen synthase. Required for insulin-stimulated meiotic reinitiation during oocyte maturation. May be involved in the regulation of vesicular functions such as preciliary trafficking and endocytic recycling. The polypeptide is RAC-alpha serine/threonine-protein kinase (Xenopus laevis (African clawed frog)).